The chain runs to 863 residues: DNA mismatch repair protein MutS (863 aa).

617–624 (GPNMGGKS) lines the ATP pocket.

The protein belongs to the DNA mismatch repair MutS family.

Its function is as follows. This protein is involved in the repair of mismatches in DNA. It is possible that it carries out the mismatch recognition step. This protein has a weak ATPase activity. In Pseudomonas fluorescens (strain SBW25), this protein is DNA mismatch repair protein MutS.